A 38-amino-acid chain; its full sequence is VRNFVTCRINRGFCVPIRCPGHRRQIGTCLGPQIKCCR.

3 disulfides stabilise this stretch: Cys7-Cys36, Cys14-Cys29, and Cys19-Cys37.

It belongs to the beta-defensin family. Neutrophilic granules.

The protein localises to the secreted. Its function is as follows. Has bactericidal activity. Active against E.coli ML35 and S.aureus 502A. The polypeptide is Beta-defensin 8 (DEFB8) (Bos taurus (Bovine)).